A 64-amino-acid chain; its full sequence is DNA gyrase inhibitor YacG (64 aa).

The Zn(2+) site is built by C9, C12, C28, and C32. A disordered region spans residues 45–64 (KRIPSAGDLSDSDDWSEQQP). The segment covering 54–64 (SDSDDWSEQQP) has biased composition (acidic residues).

Belongs to the DNA gyrase inhibitor YacG family. As to quaternary structure, interacts with GyrB. It depends on Zn(2+) as a cofactor.

Functionally, inhibits all the catalytic activities of DNA gyrase by preventing its interaction with DNA. Acts by binding directly to the C-terminal domain of GyrB, which probably disrupts DNA binding by the gyrase. This is DNA gyrase inhibitor YacG from Klebsiella pneumoniae (strain 342).